Reading from the N-terminus, the 184-residue chain is MSWRSESIWIEFITGSRKTSNFCWAFILFLGSLGFLLVGTSSYLGRNFISLFASQQIIFFPQGIVMSFYGIAGLFISCYLWCTIFWNVGSGYDLFDRKEGIVRIFRWGFPGKSRRIFLRFLMKDIQSIRIEVKEGVSTRRVLYMEIRGQGAIPLIRADENFTTREIEQKAAELAYFLRVPIEVF.

Transmembrane regions (helical) follow at residues 22–42 (FCWA…GTSS) and 57–77 (IIFF…LFIS).

This sequence belongs to the Ycf4 family.

It localises to the plastid. It is found in the chloroplast thylakoid membrane. Its function is as follows. Seems to be required for the assembly of the photosystem I complex. The protein is Photosystem I assembly protein Ycf4 of Lobularia maritima (Sweet alyssum).